We begin with the raw amino-acid sequence, 139 residues long: uncharacterized protein (139 aa).

The protein to E.coli YebE.

This is an uncharacterized protein from Yersinia enterocolitica.